Here is a 475-residue protein sequence, read N- to C-terminus: 7-dehydrocholesterol reductase (475 aa).

Residues 1 to 21 (MAAKSQPSAPKTKSTSGLTNG) form a disordered region. Residue serine 14 is modified to Phosphoserine. 6 helical membrane passes run 40-60 (LASVIFLLLFAPFIVYYFIMA), 151-173 (WLLTHLLWFANAHLLGWFSPTII), 178-200 (IPLLWCANILGYTVSTFAMVKGY), 266-286 (VTNSMVLVNILQAIYVLDFFW), 306-326 (LGWGDCVWLPYLYTLQGLYLV), and 331-351 (QLPTYYALGVLLLGLLGYYIF). Residues lysine 358, arginine 362, leucine 395, tryptophan 400, and 407-408 (NY) contribute to the NADP(+) site. Residues 420-440 (LACGGGHLLPYFYIIFMAILL) form a helical membrane-spanning segment. NADP(+)-binding positions include aspartate 447, 451–455 (CANKY), and tyrosine 462.

This sequence belongs to the ERG4/ERG24 family. As to quaternary structure, interacts with DHCR24; this interaction regulates DHCR7 activity. Interacts with TMEM147.

The protein resides in the endoplasmic reticulum membrane. The enzyme catalyses cholesterol + NADP(+) = 7-dehydrocholesterol + NADPH + H(+). It catalyses the reaction 7-dehydrodesmosterol + NADPH + H(+) = desmosterol + NADP(+). The catalysed reaction is 5,6alpha-epoxy-5alpha-cholestan-3beta-ol + H2O = 5alpha-cholestane-3beta,5,6beta-triol. It carries out the reaction 5,6beta-epoxy-5beta-cholestan-3beta-ol + H2O = 5alpha-cholestane-3beta,5,6beta-triol. It participates in steroid biosynthesis; cholesterol biosynthesis. Oxidoreductase that catalyzes the last step of the cholesterol synthesis pathway, which transforms cholesta-5,7-dien-3beta-ol (7-dehydrocholesterol,7-DHC) into cholesterol by reducing the C7-C8 double bond of its sterol core. Can also metabolize cholesta-5,7,24-trien-3beta-ol (7-dehydrodemosterol, 7-DHD) to desmosterol, which is then metabolized by the Delta(24)-sterol reductase (DHCR24) to cholesterol. Modulates ferroptosis (a form of regulated cell death driven by iron-dependent lipid peroxidation) through the metabolic breakdown of the anti-ferroptotic metabolites 7-DHC and 7-DHD which, when accumulated, divert the propagation of peroxyl radical-mediated damage from phospholipid components to its sterol core, protecting plasma and mitochondrial membranes from phospholipid autoxidation. Functionally, component of the microsomal antiestrogen binding site (AEBS), a multiproteic complex at the ER membrane that consists of an association between cholestenol Delta-isomerase/EBP and DHCR7. This complex is responsible for cholesterol-5,6-epoxide hydrolase (ChEH) activity, which consists in the hydration of cholesterol-5,6-epoxides (5,6-EC) into cholestane-3beta,5alpha,6beta-triol (CT). The precise role of each component of this complex has not been described yet. This Bos taurus (Bovine) protein is 7-dehydrocholesterol reductase (DHCR7).